A 57-amino-acid chain; its full sequence is COP9 signalosome complex subunit 9 (57 aa).

The protein belongs to the CSN9 family. As to quaternary structure, component of the CSN complex, probably composed of cops1, cops2, cops3, cops4, cops5, cops6, cops7, cops8 and cops9.

The protein resides in the nucleus. It is found in the cytoplasm. The protein localises to the nucleoplasm. Component of the COP9 signalosome complex (CSN), a complex involved in various cellular and developmental processes. The CSN complex is an essential regulator of the ubiquitin (Ubl) conjugation pathway by mediating the deneddylation of the cullin subunits of SCF-type E3 ligase complexes, leading to decrease the Ubl ligase activity. May play a role in cell proliferation. The chain is COP9 signalosome complex subunit 9 from Danio rerio (Zebrafish).